The following is a 310-amino-acid chain: Alpha/beta hydrolase domain-containing protein 17A (310 aa).

A disordered region spans residues valine 38 to alanine 61. Active-site charge relay system residues include serine 190, aspartate 255, and histidine 284. Residue serine 307 is modified to Phosphoserine.

The protein belongs to the AB hydrolase superfamily. ABHD17 family. In terms of processing, palmitoylated on cysteine residues located in a cysteine cluster at the N-terminus which promotes membrane localization. Palmitoylation is required for post-synaptic localization and for depalmitoylating activity towards DLG4/PSD95.

Its subcellular location is the cell membrane. It localises to the endosome membrane. The protein localises to the cell projection. The protein resides in the dendritic spine. It is found in the postsynaptic density membrane. The enzyme catalyses S-hexadecanoyl-L-cysteinyl-[protein] + H2O = L-cysteinyl-[protein] + hexadecanoate + H(+). Hydrolyzes fatty acids from S-acylated cysteine residues in proteins. Has depalmitoylating activity towards NRAS. Has depalmitoylating activity towards DLG4/PSD95. May have depalmitoylating activity towars MAP6. The polypeptide is Alpha/beta hydrolase domain-containing protein 17A (Mus musculus (Mouse)).